Consider the following 579-residue polypeptide: Mycobactin import ATP-binding/permease protein IrtB (579 aa).

The Cytoplasmic segment spans residues 1–25 (MIRTLLRLVPAEKRGAVAGYAVLTL). Positions 21-299 (AVLTLLSVLL…IADLAPALET (279 aa)) constitute an ABC transmembrane type-1 domain. The helical transmembrane segment at 26 to 46 (LSVLLRAVGAVLLIPLLAALF) threads the bilayer. Over 47–48 (SD) the chain is Periplasmic. Residues 49-69 (TPSDAWLWLGWLTAVTLAGWV) traverse the membrane as a helical segment. The Cytoplasmic portion of the chain corresponds to 70-126 (TDTNTARLGFDLGFAVLSRTQHDMADRLPNVAMSWFTPDNTATARQAIAATGPELAG). 2 helical membrane passes run 127-147 (LVVN…AIGV) and 148-168 (ALLF…AVLF). Residues 169–241 (GALALSGRLS…RLLTMQIPGQ (73 aa)) are Cytoplasmic-facing. The helical transmembrane segment at 242-262 (VLFSLAGQVALIGFAGMAVWL) threads the bilayer. Residues 263-272 (TVRGQLGVPE) are Periplasmic-facing. The helical transmembrane segment at 273–293 (AIALIVVLVRYLEPFAAIADL) threads the bilayer. At 294–579 (APALETTRAT…SEWAIGSTAR (286 aa)) the chain is on the cytoplasmic side. An ABC transporter domain is found at 332–565 (IEFDDVRFSY…GGRFAQFWAQ (234 aa)). Position 364 to 371 (364 to 371 (GPSGSGKT)) interacts with ATP.

It belongs to the ABC transporter superfamily. Siderophore-Fe(3+) uptake transporter (SIUT) (TC 3.A.1.21) family. Forms a heterodimer with IrtA.

The protein resides in the cell inner membrane. The ATPase activity of IrtAB is stimulated more than 38-fold in the presence of Fe-MBT, and more than 10-fold in the presence of Fe-cMBT. Its function is as follows. Part of the ABC transporter complex IrtAB involved in the import of iron-bound mycobactin (Fe-MBT) and carboxymycobactin (Fe-cMBT). Has a preference for Fe-MBT over Fe-cMBT. Transmembrane domains (TMD) form a pore in the membrane and the ATP-binding domain (NBD) is responsible for energy generation. The sequence is that of Mycobactin import ATP-binding/permease protein IrtB from Mycolicibacterium thermoresistibile (strain ATCC 19527 / DSM 44167 / CIP 105390 / JCM 6362 / NCTC 10409 / 316) (Mycobacterium thermoresistibile).